Here is a 631-residue protein sequence, read N- to C-terminus: Occlusion-derived virus envelope protein E66 (631 aa).

The protein belongs to the baculoviridae E66 family.

It is found in the virion membrane. Functionally, component of the polyhedra envelope. The polypeptide is Occlusion-derived virus envelope protein E66 (Leucania separata nucleopolyhedrovirus (LsNPV)).